The sequence spans 122 residues: Large ribosomal subunit protein uL14 (122 aa).

This sequence belongs to the universal ribosomal protein uL14 family. Part of the 50S ribosomal subunit. Forms a cluster with proteins L3 and L19. In the 70S ribosome, L14 and L19 interact and together make contacts with the 16S rRNA in bridges B5 and B8.

Functionally, binds to 23S rRNA. Forms part of two intersubunit bridges in the 70S ribosome. This is Large ribosomal subunit protein uL14 from Mycobacterium marinum (strain ATCC BAA-535 / M).